The chain runs to 202 residues: Holliday junction branch migration complex subunit RuvA (202 aa).

The segment at 1–64 (MIDFLKGRLV…ETALEMFGFS (64 aa)) is domain I. The segment at 65-143 (SELDRTAFLL…KQQVAVSAEL (79 aa)) is domain II. The interval 144–152 (PASDGVPVL) is flexible linker. Residues 152–202 (LAGRAENEALAALISLGYTPREAREALNRLPDRKLDAAGLVHAALRIMGSQ) are domain III.

It belongs to the RuvA family. In terms of assembly, homotetramer. Forms an RuvA(8)-RuvB(12)-Holliday junction (HJ) complex. HJ DNA is sandwiched between 2 RuvA tetramers; dsDNA enters through RuvA and exits via RuvB. An RuvB hexamer assembles on each DNA strand where it exits the tetramer. Each RuvB hexamer is contacted by two RuvA subunits (via domain III) on 2 adjacent RuvB subunits; this complex drives branch migration. In the full resolvosome a probable DNA-RuvA(4)-RuvB(12)-RuvC(2) complex forms which resolves the HJ.

Its subcellular location is the cytoplasm. Its function is as follows. The RuvA-RuvB-RuvC complex processes Holliday junction (HJ) DNA during genetic recombination and DNA repair, while the RuvA-RuvB complex plays an important role in the rescue of blocked DNA replication forks via replication fork reversal (RFR). RuvA specifically binds to HJ cruciform DNA, conferring on it an open structure. The RuvB hexamer acts as an ATP-dependent pump, pulling dsDNA into and through the RuvAB complex. HJ branch migration allows RuvC to scan DNA until it finds its consensus sequence, where it cleaves and resolves the cruciform DNA. This Desulforudis audaxviator (strain MP104C) protein is Holliday junction branch migration complex subunit RuvA.